Consider the following 500-residue polypeptide: MPENFGYISQVIGSVVDVSYRYTSGGLPKINDALQITHSNGKVLIVEVQQHIGEDTVRAVAMDSTDGISRGMKAVNLGRPISMPIGNQVKGRLLNVIGETIDGMKCLSYENTKSIHCDPPKFKDLSTSVEVLFTGIKVIDLLAPYLKGGKIGLFGGAGVGKTVLIMELINNIAKKHNGFSVFAGVGERTREGNDLLREMIESGVIRYGKEFEEGMRLGEWDLSKIDYEELKKSQATLVFGQMNEPPGARSSVVLSGLTIAEAFRDQSGSDGHDVLFFIDNIFRFTQAGSEVSALLGRMPSAVGYQPTLATEMGKMQERITSTKNGSITSIQAVYVPADDLTDPAPATTFTFLDATTVLDRKIFELGIYPAVDPLNSVSRILDPNVLGQEHYDTAQKVKQLLQRYKELQDIIAILGMEELSEEDKLVVNRARRVQRFLSQPFFMAEAFSGIPGVMVSREDTIKGFNMLMNGDVDYLPEQAFLNVGTIEDAIEKGKKLTALT.

155–162 (GGAGVGKT) provides a ligand contact to ATP.

This sequence belongs to the ATPase alpha/beta chains family. F-type ATPases have 2 components, CF(1) - the catalytic core - and CF(0) - the membrane proton channel. CF(1) has five subunits: alpha(3), beta(3), gamma(1), delta(1), epsilon(1). CF(0) has three main subunits: a(1), b(2) and c(9-12). The alpha and beta chains form an alternating ring which encloses part of the gamma chain. CF(1) is attached to CF(0) by a central stalk formed by the gamma and epsilon chains, while a peripheral stalk is formed by the delta and b chains.

Its subcellular location is the cell inner membrane. It catalyses the reaction ATP + H2O + 4 H(+)(in) = ADP + phosphate + 5 H(+)(out). In terms of biological role, produces ATP from ADP in the presence of a proton gradient across the membrane. The catalytic sites are hosted primarily by the beta subunits. The protein is ATP synthase subunit beta of Azobacteroides pseudotrichonymphae genomovar. CFP2.